The following is a 581-amino-acid chain: Solute carrier family 15 member 3 (581 aa).

Residues M1 to G14 are compositionally biased toward basic and acidic residues. Residues M1 to G26 are disordered. A helical membrane pass occupies residues V38–L58. 2 N-linked (GlcNAc...) asparagine glycosylation sites follow: N61 and N66. A run of 3 helical transmembrane segments spans residues A76–V96, A103–F123, and P155–V175. N178 carries N-linked (GlcNAc...) asparagine glycosylation. A helical transmembrane segment spans residues N200–I220. The N-linked (GlcNAc...) asparagine glycan is linked to N223. Transmembrane regions (helical) follow at residues I232–I252 and F310–Y330. An N-linked (GlcNAc...) asparagine glycan is attached at N356. Transmembrane regions (helical) follow at residues T369–L389 and M411–E431. A glycan (N-linked (GlcNAc...) asparagine) is linked at N439. 3 helical membrane-spanning segments follow: residues I458–P478, G497–L517, and L540–A560.

It belongs to the major facilitator superfamily. Proton-dependent oligopeptide transporter (POT/PTR) (TC 2.A.17) family.

It is found in the lysosome membrane. The protein resides in the endosome membrane. It carries out the reaction glycylglycylglycine(out) + n H(+)(out) = glycylglycylglycine(in) + n H(+)(in). It catalyses the reaction carnosine(out) + n H(+)(out) = carnosine(in) + n H(+)(in). The catalysed reaction is L-histidine(out) + n H(+)(out) = L-histidine(in) + n H(+)(in). The enzyme catalyses N-acetyl-D-muramoyl-L-alanyl-D-isoglutamine(out) + n H(+)(out) = N-acetyl-D-muramoyl-L-alanyl-D-isoglutamine(in) + n H(+)(in). In terms of biological role, proton-coupled amino-acid transporter that transports free histidine and certain di- and tripeptides, and is involved in innate immune response. Also able to transport carnosine. Involved in the detection of microbial pathogens by toll-like receptors (TLRs) and NOD-like receptors (NLRs), probably by mediating transport of bacterial peptidoglycans across the endolysosomal membrane: catalyzes the transport of certain bacterial peptidoglycans, such as muramyl dipeptide (MDP), the NOD2 ligand. This is Solute carrier family 15 member 3 from Homo sapiens (Human).